The following is a 212-amino-acid chain: uncharacterized protein (212 aa).

Residues 1–88 are disordered; the sequence is MAEEQKIALE…PAPAKPASAS (88 aa). Phosphoserine is present on Ser-13. The span at 23–41 shows a compositional bias: pro residues; the sequence is ADTPAPAPAEIPAPAPAPT. Basic and acidic residues predominate over residues 45 to 54; the sequence is VTKDVAEEKI.

The protein belongs to the remorin family.

Its subcellular location is the cell membrane. This is an uncharacterized protein from Arabidopsis thaliana (Mouse-ear cress).